Reading from the N-terminus, the 290-residue chain is GTPase Era (290 aa).

The 168-residue stretch at 2–169 folds into the Era-type G domain; the sequence is KSGFAAILGR…KNKIYENFSE (168 aa). The G1 stretch occupies residues 10–17; sequence GRPSTGKS. 10-17 contributes to the GTP binding site; it reads GRPSTGKS. The tract at residues 36 to 40 is G2; that stretch reads QTTRN. The tract at residues 57 to 60 is G3; sequence DTPG. GTP contacts are provided by residues 57–61 and 119–122; these read DTPGF and NKVD. The segment at 119-122 is G4; the sequence is NKVD. The G5 stretch occupies residues 148-150; that stretch reads ISA. In terms of domain architecture, KH type-2 spans 200–276; sequence LKEELPYSLY…NLFLQVKLKK (77 aa).

Belongs to the TRAFAC class TrmE-Era-EngA-EngB-Septin-like GTPase superfamily. Era GTPase family. Monomer.

The protein resides in the cytoplasm. It localises to the cell inner membrane. In terms of biological role, an essential GTPase that binds both GDP and GTP, with rapid nucleotide exchange. Plays a role in 16S rRNA processing and 30S ribosomal subunit biogenesis and possibly also in cell cycle regulation and energy metabolism. This Borrelia garinii subsp. bavariensis (strain ATCC BAA-2496 / DSM 23469 / PBi) (Borreliella bavariensis) protein is GTPase Era.